Consider the following 555-residue polypeptide: Hydroxylamine reductase (555 aa).

[4Fe-4S] cluster-binding residues include C3, C6, C18, and C25. Residues H252, E276, C320, C407, C435, C460, E494, and K496 each coordinate hybrid [4Fe-2O-2S] cluster. C407 is subject to Cysteine persulfide.

It belongs to the HCP family. Requires [4Fe-4S] cluster as cofactor. The cofactor is hybrid [4Fe-2O-2S] cluster.

The protein resides in the cytoplasm. The enzyme catalyses A + NH4(+) + H2O = hydroxylamine + AH2 + H(+). Functionally, catalyzes the reduction of hydroxylamine to form NH(3) and H(2)O. The protein is Hydroxylamine reductase of Burkholderia ambifaria (strain MC40-6).